The sequence spans 274 residues: MVDFLQALVLGLIQGLTEFLPISSSAHLRIYPELFGWGDPGAAFTAVIQIGTEVAVLMFFRKDIWRIGRAWLLSLFKPEYRGHLDARMGWFIIVGSVPIVLLGIALKDVIEEDFRSLWLIGTTLIVLGLVLGVADRLGGTDKTIKQISLRDAILMGLAQALALIPGVSRSGATLSMGRLLGYDREAATRYAFLLAIPAVIGAGVFELKDIPNGDNLYGWGPTIVATIVSFVVGYAAIAWLLRYVTTRSYAPFVLYRVALGAATLVLVATGVIAA.

The next 7 helical transmembrane spans lie at proline 40–phenylalanine 60, tryptophan 90–isoleucine 110, phenylalanine 114–alanine 134, isoleucine 147–valine 167, tyrosine 190–isoleucine 210, proline 221–leucine 241, and phenylalanine 252–isoleucine 272.

The protein belongs to the UppP family.

The protein resides in the cell membrane. The catalysed reaction is di-trans,octa-cis-undecaprenyl diphosphate + H2O = di-trans,octa-cis-undecaprenyl phosphate + phosphate + H(+). Catalyzes the dephosphorylation of undecaprenyl diphosphate (UPP). Confers resistance to bacitracin. In Nocardioides sp. (strain ATCC BAA-499 / JS614), this protein is Undecaprenyl-diphosphatase.